We begin with the raw amino-acid sequence, 64 residues long: Large ribosomal subunit protein bL35 (64 aa).

This sequence belongs to the bacterial ribosomal protein bL35 family.

This is Large ribosomal subunit protein bL35 from Acinetobacter baumannii (strain AB307-0294).